Reading from the N-terminus, the 414-residue chain is Probable solanesyl-diphosphate synthase 3, chloroplastic (414 aa).

The span at 1–23 (MAAPSSLASSSHLSRRATAAASP) shows a compositional bias: low complexity. The tract at residues 1–36 (MAAPSSLASSSHLSRRATAAASPSIPPPSPPPPPQR) is disordered. A chloroplast-targeting transit peptide spans 1–72 (MAAPSSLASS…KPGVAAVDVP (72 aa)). Residues 24-35 (SIPPPSPPPPPQ) are compositionally biased toward pro residues. Isopentenyl diphosphate contacts are provided by lysine 134, arginine 137, and histidine 172. Positions 179 and 183 each coordinate Mg(2+). Arginine 188 contacts an all-trans-polyprenyl diphosphate. Arginine 189 is a binding site for isopentenyl diphosphate. Residues lysine 265, threonine 266, glutamine 303, and lysine 320 each coordinate an all-trans-polyprenyl diphosphate.

This sequence belongs to the FPP/GGPP synthase family. In terms of assembly, homodimer. Mg(2+) serves as cofactor.

Its subcellular location is the plastid. It is found in the chloroplast. The catalysed reaction is 7 isopentenyl diphosphate + (2E)-geranyl diphosphate = all-trans-nonaprenyl diphosphate + 7 diphosphate. Functionally, involved in providing solanesyl diphosphate for plastoquinone-9 (PQ-9) formation. The chain is Probable solanesyl-diphosphate synthase 3, chloroplastic from Oryza sativa subsp. japonica (Rice).